A 331-amino-acid polypeptide reads, in one-letter code: Protein RecA (331 aa).

66–73 serves as a coordination point for ATP; the sequence is GPESSGKT.

It belongs to the RecA family.

The protein resides in the cytoplasm. Its function is as follows. Can catalyze the hydrolysis of ATP in the presence of single-stranded DNA, the ATP-dependent uptake of single-stranded DNA by duplex DNA, and the ATP-dependent hybridization of homologous single-stranded DNAs. It interacts with LexA causing its activation and leading to its autocatalytic cleavage. The sequence is that of Protein RecA from Acholeplasma laidlawii.